Reading from the N-terminus, the 320-residue chain is L-lactate dehydrogenase (320 aa).

NAD(+)-binding positions include Val-18, Asp-39, Arg-44, Tyr-69, and 83-84 (GA). Gln-86 and Arg-92 together coordinate substrate. Residues Thr-105, 122–124 (AAN), and Ser-147 contribute to the NAD(+) site. 124-127 (NPVD) contacts substrate. 152 to 155 (DSAR) contributes to the substrate binding site. His-179 acts as the Proton acceptor in catalysis. Tyr-223 is modified (phosphotyrosine). A substrate-binding site is contributed by Thr-232.

It belongs to the LDH/MDH superfamily. LDH family. In terms of assembly, homotetramer.

The protein resides in the cytoplasm. The enzyme catalyses (S)-lactate + NAD(+) = pyruvate + NADH + H(+). Its pathway is fermentation; pyruvate fermentation to lactate; (S)-lactate from pyruvate: step 1/1. In terms of biological role, catalyzes the conversion of lactate to pyruvate. This chain is L-lactate dehydrogenase, found in Pediococcus pentosaceus (strain ATCC 25745 / CCUG 21536 / LMG 10740 / 183-1w).